Here is a 142-residue protein sequence, read N- to C-terminus: Large ribosomal subunit protein uL13 (142 aa).

The protein belongs to the universal ribosomal protein uL13 family. Part of the 50S ribosomal subunit.

In terms of biological role, this protein is one of the early assembly proteins of the 50S ribosomal subunit, although it is not seen to bind rRNA by itself. It is important during the early stages of 50S assembly. This is Large ribosomal subunit protein uL13 from Marinomonas sp. (strain MWYL1).